The chain runs to 528 residues: D-3-phosphoglycerate dehydrogenase (528 aa).

Residues 151-152 (RI), aspartate 171, 230-232 (AAR), and aspartate 256 each bind NAD(+). Arginine 232 is an active-site residue. The active site involves glutamate 261. The active-site Proton donor is the histidine 279. Residue 279–282 (HLGA) participates in NAD(+) binding. The ACT domain maps to 455–527 (NLIIHYVDRP…DAYKLEVVDL (73 aa)).

It belongs to the D-isomer specific 2-hydroxyacid dehydrogenase family.

The catalysed reaction is (2R)-3-phosphoglycerate + NAD(+) = 3-phosphooxypyruvate + NADH + H(+). The enzyme catalyses (R)-2-hydroxyglutarate + NAD(+) = 2-oxoglutarate + NADH + H(+). Its pathway is amino-acid biosynthesis; L-serine biosynthesis; L-serine from 3-phospho-D-glycerate: step 1/3. Functionally, catalyzes the reversible oxidation of 3-phospho-D-glycerate to 3-phosphonooxypyruvate, the first step of the phosphorylated L-serine biosynthesis pathway. Also catalyzes the reversible oxidation of 2-hydroxyglutarate to 2-oxoglutarate. The polypeptide is D-3-phosphoglycerate dehydrogenase (serA) (Mycobacterium bovis (strain ATCC BAA-935 / AF2122/97)).